Here is a 495-residue protein sequence, read N- to C-terminus: UDP-N-acetylmuramoyl-L-alanyl-D-glutamate--2,6-diaminopimelate ligase (495 aa).

Residues Leu-32 and Ser-34 each coordinate UDP-N-acetyl-alpha-D-muramoyl-L-alanyl-D-glutamate. 119-125 (GTNGKTT) lines the ATP pocket. Residues Asn-160, 161–162 (TT), Ser-188, Gln-194, and Arg-196 each bind UDP-N-acetyl-alpha-D-muramoyl-L-alanyl-D-glutamate. An N6-carboxylysine modification is found at Lys-228. Residues Arg-390, 414–417 (DNPR), Gly-465, and Glu-469 each bind meso-2,6-diaminopimelate. The Meso-diaminopimelate recognition motif signature appears at 414–417 (DNPR).

It belongs to the MurCDEF family. MurE subfamily. Mg(2+) is required as a cofactor. Carboxylation is probably crucial for Mg(2+) binding and, consequently, for the gamma-phosphate positioning of ATP.

It is found in the cytoplasm. The catalysed reaction is UDP-N-acetyl-alpha-D-muramoyl-L-alanyl-D-glutamate + meso-2,6-diaminopimelate + ATP = UDP-N-acetyl-alpha-D-muramoyl-L-alanyl-gamma-D-glutamyl-meso-2,6-diaminopimelate + ADP + phosphate + H(+). It functions in the pathway cell wall biogenesis; peptidoglycan biosynthesis. Catalyzes the addition of meso-diaminopimelic acid to the nucleotide precursor UDP-N-acetylmuramoyl-L-alanyl-D-glutamate (UMAG) in the biosynthesis of bacterial cell-wall peptidoglycan. This Vibrio cholerae serotype O1 (strain ATCC 39315 / El Tor Inaba N16961) protein is UDP-N-acetylmuramoyl-L-alanyl-D-glutamate--2,6-diaminopimelate ligase.